Here is a 92-residue protein sequence, read N- to C-terminus: Cytochrome c2 (92 aa).

4 residues coordinate heme c: Cys12, Cys15, His16, and Met66.

This sequence belongs to the cytochrome c family. In terms of processing, binds 1 heme c group covalently per subunit.

Functionally, cytochrome c2 is found mainly in purple, non-sulfur, photosynthetic bacteria where it functions as the electron donor to the oxidized bacteriochlorophyll in the photophosphorylation pathway. However, it may also have a role in the respiratory chain and is found in some non-photosynthetic bacteria. The chain is Cytochrome c2 from Rhodocyclus tenuis (Rhodospirillum tenue).